A 447-amino-acid polypeptide reads, in one-letter code: tRNA modification GTPase MnmE (447 aa).

Positions 22, 81, and 121 each coordinate (6S)-5-formyl-5,6,7,8-tetrahydrofolate. The TrmE-type G domain maps to 217–373; sequence GIVLAITGET…LMSEIVSYAE (157 aa). Position 227 (Asn-227) interacts with K(+). GTP-binding positions include 227–232, 246–252, and 271–274; these read NTGKSS, SDIPGTT, and DTAG. Residue Ser-231 coordinates Mg(2+). Ser-246, Ile-248, and Thr-251 together coordinate K(+). Residue Thr-252 participates in Mg(2+) binding. Lys-447 provides a ligand contact to (6S)-5-formyl-5,6,7,8-tetrahydrofolate.

Belongs to the TRAFAC class TrmE-Era-EngA-EngB-Septin-like GTPase superfamily. TrmE GTPase family. Homodimer. Heterotetramer of two MnmE and two MnmG subunits. It depends on K(+) as a cofactor.

It is found in the cytoplasm. Its function is as follows. Exhibits a very high intrinsic GTPase hydrolysis rate. Involved in the addition of a carboxymethylaminomethyl (cmnm) group at the wobble position (U34) of certain tRNAs, forming tRNA-cmnm(5)s(2)U34. The polypeptide is tRNA modification GTPase MnmE (Orientia tsutsugamushi (strain Boryong) (Rickettsia tsutsugamushi)).